Consider the following 243-residue polypeptide: MDQYCILGRIGEGAHGIVFKAKHVETGEIVALKKVALRRLEDGFPNQALREIKALQEMGDNQYVVQLKAVFPHGGGFVLAFEFMLSDLAEVVRHAQRPLAQAQVKSYLQMLLKGVAFCHANNIVHRDLKPANLLISASGQLKIADFGLARVFSPDGSRLYTHQVATRSSLSCRTTTRSPLRSRCPCPWRRCCLTSLPRHWICWVNSFSTLLTSASQLPRLSSISTSSQLPCLPIHLSCRFLSV.

Residues 4–243 enclose the Protein kinase domain; it reads YCILGRIGEG…IHLSCRFLSV (240 aa). ATP contacts are provided by residues 10–18 and lysine 33; that span reads IGEGAHGIV. The active-site Proton acceptor is aspartate 127.

This sequence belongs to the protein kinase superfamily. CMGC Ser/Thr protein kinase family. CDC2/CDKX subfamily. In terms of assembly, monomer. Interacts with TBC1D32 and MAK.

The protein localises to the nucleus. Its subcellular location is the cytoplasm. The protein resides in the cell projection. It localises to the cilium. The enzyme catalyses L-seryl-[protein] + ATP = O-phospho-L-seryl-[protein] + ADP + H(+). It carries out the reaction L-threonyl-[protein] + ATP = O-phospho-L-threonyl-[protein] + ADP + H(+). Functionally, required for high-level Shh responses in the developing neural tube. Together with TBC1D32, controls the structure of the primary cilium by coordinating assembly of the ciliary membrane and axoneme, allowing GLI2 to be properly activated in response to SHH signaling. Involved in cell growth. Activates CDK2, a kinase involved in the control of the cell cycle, by phosphorylating residue 'Thr-160'. The protein is Cyclin-dependent kinase 20 (CDK20) of Macaca mulatta (Rhesus macaque).